Reading from the N-terminus, the 919-residue chain is Motility hub protein FimV (919 aa).

The first 24 residues, M1–G24, serve as a signal peptide directing secretion. Positions A140–A171 are enriched in low complexity. Disordered regions lie at residues A140–R177 and E237–S312. Residues D174–I229 form the LysM domain. Residues S245–G256 are compositionally biased toward polar residues. The segment covering K299–S312 has biased composition (basic and acidic residues). A coiled-coil region spans residues L319–Q367. A disordered region spans residues G372–V445. Low complexity predominate over residues A390 to A417. Pro residues predominate over residues P418–A443. The chain crosses the membrane as a helical span at residues L464–L484. Residues A785–S816 form a disordered region.

As to quaternary structure, interacts with FimL. Interacts with DgcP.

The protein resides in the cell inner membrane. Functionally, inner membrane hub protein that plays both cAMP-dependent and cAMP-independent roles in twitching motility. Regulates intracellular cyclic AMP (cAMP) levels through the activation of adenylate cyclase CyaB. Plays an essential role in a number of virulence mechanisms including type IV pilus (T4P)-mediated assembly and twitching motility as well as cAMP-dependent virulence gene expression. Also mediates type II secretion (T2S) of lipases and proteases. In addition, mediates the cAMP-independent localization of multiple T4P structural and regulatory components to the cell poles. This role in directing proteins to the cell pole is not restricted to type IV component and involves other proteins such as the diguanylate cyclase DgcP. The sequence is that of Motility hub protein FimV (fimV) from Pseudomonas aeruginosa (strain ATCC 15692 / DSM 22644 / CIP 104116 / JCM 14847 / LMG 12228 / 1C / PRS 101 / PAO1).